Consider the following 80-residue polypeptide: U-actitoxin-Avd9b (80 aa).

The signal sequence occupies residues 1–20 (MNLKVLAVFVLCAILVVVTA). Positions 21 to 39 (ERRGTETGGYKKDTLQDLK) are excised as a propeptide. One can recognise a ShKT domain in the interval 45–80 (CFDRYREAACTSDNIRLLCKTSAKYQINCKKSCGLC). Cystine bridges form between Cys45/Cys80, Cys54/Cys73, and Cys63/Cys77. The interval 68-69 (KY) is crucial for binding to potassium channels.

Belongs to the sea anemone type 1 potassium channel toxin family. Type 1b subfamily.

The protein localises to the secreted. Its subcellular location is the nematocyst. Its function is as follows. Inhibits voltage-gated potassium channels (Kv1/KCNA). The sequence is that of U-actitoxin-Avd9b from Anemonia viridis (Snakelocks anemone).